Consider the following 475-residue polypeptide: Gelsolin-like protein 1 (475 aa).

The segment at 1–131 (MGGTSLDPAL…GYRHVDDQFK (131 aa)) is actin binding, actin severing, Ca-sensitive. The segment at 1–239 (MGGTSLDPAL…VRKVSKGKDD (239 aa)) is necessary for barbed end capping activity. The stretch at 27 to 105 (FVLEPVPEVD…IQNYESPLFL (79 aa)) is one Gelsolin-like 1 repeat. The tract at residues 70 to 73 (DEIG) is actin-actin interfilament contact point. The segment at 106–147 (SYFPDGIRYVSGGYESGYRHVDDQFKNWKPHLFHCKGKRNVR) is required for synapse elimination during development. The interval 133-227 (WKPHLFHCKG…STFWSYFGGV (95 aa)) is required for phosphatidylinositol 4,5-bisphosphate binding and regulation. 3 Gelsolin-like repeats span residues 148-208 (CTEV…KVHI), 275-341 (RKEQ…STQF), and 375-447 (EIAN…PPTF). An F- and G-actin binding, Ca-independent region spans residues 240–475 (DDNYWKRLTE…VQNMRRLLFH (236 aa)). The tract at residues 248–348 (TEQITLWKVS…TQFTQWFRDW (101 aa)) is inhibitory for phosphatidylinositol 4,5-bisphosphate binding activity.

This sequence belongs to the villin/gelsolin family. As to quaternary structure, monomer. Binds to actin monomers and filaments. Post-translationally, cleavage by caspase ced-3 activates its actin-severing function and is required for the elimination of presynaptic components during development.

Its subcellular location is the cytoplasm. It is found in the cytoskeleton. Its function is as follows. Calcium-regulated, actin-modulating protein that binds to the plus (or barbed) ends of actin monomers or filaments, preventing monomer exchange (end-blocking or capping). Binds actin but does not nucleate actin polymerization, albeit slows down elongation by blocking the barbed ends. By promoting actin depolymerization, required for the elimination of presynaptic components downstream of the egl-1, ced-4 and ced-3 apoptotic pathway during larval development. In Caenorhabditis elegans, this protein is Gelsolin-like protein 1.